A 321-amino-acid polypeptide reads, in one-letter code: Homoserine O-succinyltransferase (321 aa).

Residue Cys142 is the Acyl-thioester intermediate of the active site. Residues Lys163 and Ser192 each contribute to the substrate site. The Proton acceptor role is filled by His235. Glu237 is a catalytic residue. A substrate-binding site is contributed by Arg249.

This sequence belongs to the MetA family.

It is found in the cytoplasm. The catalysed reaction is L-homoserine + succinyl-CoA = O-succinyl-L-homoserine + CoA. Its pathway is amino-acid biosynthesis; L-methionine biosynthesis via de novo pathway; O-succinyl-L-homoserine from L-homoserine: step 1/1. In terms of biological role, transfers a succinyl group from succinyl-CoA to L-homoserine, forming succinyl-L-homoserine. This is Homoserine O-succinyltransferase from Shewanella loihica (strain ATCC BAA-1088 / PV-4).